The chain runs to 262 residues: Expansin-A21 (262 aa).

An N-terminal signal peptide occupies residues 1-29 (MKLLEKMTYVECFMIIMATWFMFISYSHG). Residues 64–169 (EGACGYGDLN…RRVPCAKTGG (106 aa)) form the Expansin-like EG45 domain. Residues 179 to 258 (NILTILPYNV…SWGFGQTFDG (80 aa)) form the Expansin-like CBD domain.

The protein belongs to the expansin family. Expansin A subfamily.

Its subcellular location is the secreted. The protein localises to the cell wall. It is found in the membrane. In terms of biological role, causes loosening and extension of plant cell walls by disrupting non-covalent bonding between cellulose microfibrils and matrix glucans. No enzymatic activity has been found. The protein is Expansin-A21 (EXPA21) of Arabidopsis thaliana (Mouse-ear cress).